A 2663-amino-acid polypeptide reads, in one-letter code: MPKGGCPKAPQQEELPLSSDMVEKQTGKKDKDKVSLTKTPKLERGDGGKEVRERASKRKLPFTAGANGEQKDSDTEKQGPERKRIKKEPVTRKAGLLFGMGLSGIRAGYPLSERQQVALLMQMTAEESANSPVDTTPKHPSQSTVCQKGTPNSASKTKDKVNKRNERGETRLHRAAIRGDARRIKELISEGADVNVKDFAGWTALHEACNRGYYDVAKQLLAAGAEVNTKGLDDDTPLHDAANNGHYKVVKLLLRYGGNPQQSNRKGETPLKVANSPTMVNLLLGKGTYTSSEESSTESSEEEDAPSFAPSSSVDGNNTDSEFEKGLKHKAKNPEPQKATAPVKDEYEFDEDDEQDRVPPVDDKHLLKKDYRKETKSNSFISIPKMEVKSYTKNNTIAPKKASHRILSDTSDEEDASVTVGTGEKLRLSAHTILPGSKTREPSNAKQQKEKNKVKKKRKKETKGREVRFGKRSDKFCSSESESESSESGEDDRDSLGSSGCLKGSPLVLKDPSLFSSLSASSTSSHGSSAAQKQNPSHTDQHTKHWRTDNWKTISSPAWSEVSSLSDSTRTRLTSESDYSSEGSSVESLKPVRKRQEHRKRASLSEKKSPFLSSAEGAVPKLDKEGKVVKKHKTKHKHKNKEKGQCSISQELKLKSFTYEYEDSKQKSDKAILLENDLSTENKLKVLKHDRDHFKKEEKLSKMKLEEKEWLFKDEKSLKRIKDTNKDISRSFREEKDRSNKAEKERSLKEKSPKEEKLRLYKEERKKKSKDRPSKLEKKNDLKEDKISKEKEKIFKEDKEKLKKEKVYREDSAFDEYCNKNQFLENEDTKFSLSDDQRDRWFSDLSDSSFDFKGEDSWDSPVTDYRDMKSDSVAKLILETVKEDSKERRRDSRAREKRDYREPFFRKKDRDYLDKNSEKRKEQTEKHKSVPGYLSEKDKKRRESAEAGRDRKDALESCKERRDGRAKPEEAHREELKECGCESGFKDKSDGDFGKGLEPWERHHPAREKEKKDGPDKERKEKTKPERYKEKSSDKDKSEKSILEKCQKDKEFDKCFKEKKDTKEKHKDTHGKDKERKASLDQGKEKKEKAFPGIISEDFSEKKDDKKGKEKSWYIADIFTDESEDDRDSCMGSGFKMGEASDLPRTDGLQEKEEGREAYASDRHRKSSDKQHPERQKDKEPRDRRKDRGAADAGRDKKEKVFEKHKEKKDKESTEKYKDRKDRASVDSTQDKKNKQKLPEKAEKKHAAEDKAKSKHKEKSDKEHSKERKSSRSADAEKSLLEKLEEEALHEYREDSNDKISEVSSDSFTDRGQEPGLTAFLEVSFTEPPGDDKPRESACLPEKLKEKERHRHSSSSSKKSHDRERAKKEKAEKKEKGEDYKEGGSRKDSGQYEKDFLEADAYGVSYNMKADIEDELDKTIELFSTEKKDKNDSEREPSKKIEKELKPYGSSAINILKEKKKREKHREKWRDEKERHRDRHADGLLRHHRDELLRHHRDEQKPATRDKDSPPRVLKDKSRDEGPRLGDAKLKEKFKDGAEKEKGDPVKMSNGNDKVAPSKDPGKKDARPREKLLGDGDLMMTSFERMLSQKDLEIEERHKRHKERMKQMEKLRHRSGDPKLKEKAKPADDGRKKGLDIPAKKPPGLDPPFKDKKLKESTPIPPAAENKLHPASGADSKDWLAGPHMKEVLPASPRPDQSRPTGVPTPTSVLSCPSYEEVMHTPRTPSCSADDYADLVFDCADSQHSTPVPTAPTSACSPSFFDRFSVASSGLSENASQAPARPLSTNLYRSVSVDIRRTPEEEFSVGDKLFRQQSVPAASSYDSPMPPSMEDRAPLPPVPAEKFACLSPGYYSPDYGLPSPKVDALHCPPAAVVTVTPSPEGVFSSLQAKPSPSPRAELLVPSLEGALPPDLDTSEDQQATAAIIPPEPSYLEPLDEGPFSAVITEEPVEWAHPSEQALASSLIGGTSENPVSWPVGSDLLLKSPQRFPESPKRFCPADPLHSAAPGPFSASEAPYPAPPASPAPYALPVAEPGLEDVKDGVDAVPAAISTSEAAPYAPPSGLESFFSNCKSLPEAPLDVAPEPACVAAVAQVEALGPLENSFLDGSRGLSHLGQVEPVPWADAFAGPEDDLDLGPFSLPELPLQTKDAADGEAEPVEESLAPPEEMPPGAPGVINGGDVSTVVAEEPPALPPDQASTRLPAELEPEPSGEPKLDVALEAAVEAETVPEERARGDPDSSVEPAPVPPEQRPLGSGDQGAEAEGPPAASLCAPDGPAPNTVAQAQAADGAGPEDDTEASRAAAPAEGPPGGIQPEAAEPKPTAEAPKAPRVEEIPQRMTRNRAQMLANQSKQGPPPSEKECAPTPAPVTRAKARGSEDDDAQAQHPRKRRFQRSTQQLQQQLNTSTQQTREVIQQTLAAIVDAIKLDAIEPYHSDRANPYFEYLQIRKKIEEKRKILCCITPQAPQCYAEYVTYTGSYLLDGKPLSKLHIPVIAPPPSLAEPLKELFRQQEAVRGKLRLQHSIEREKLIVSCEQEILRVHCRAARTIANQAVPFSACTMLLDSEVYNMPLESQGDENKSVRDRFNARQFISWLQDVDDKYDRMKTCLLMRQQHEAAALNAVQRMEWQLKVQELDPAGHKSLCVNEVPSFYVPMVDVNDDFVLLPA.

Disordered regions lie at residues 1–90 (MPKG…KEPV) and 128–169 (SANS…ERGE). Basic and acidic residues-rich tracts occupy residues 21-54 (MVEK…VRER) and 69-90 (EQKD…KEPV). Over residues 128 to 155 (SANSPVDTTPKHPSQSTVCQKGTPNSAS) the composition is skewed to polar residues. Residues 156 to 169 (KTKDKVNKRNERGE) are compositionally biased toward basic and acidic residues. ANK repeat units follow at residues 167 to 196 (RGET…DVNV), 200 to 229 (AGWT…EVNT), 233 to 262 (DDDT…NPQQ), and 266 to 292 (KGET…YTSS). At serine 276 the chain carries Phosphoserine. Disordered regions lie at residues 289–380 (YTSS…SNSF), 398–647 (APKK…GQCS), and 723–783 (DTNK…NDLK). The span at 295–305 (SSTESSEEEDA) shows a compositional bias: acidic residues. Positions 309–320 (APSSSVDGNNTD) are enriched in polar residues. The span at 356 to 376 (DRVPPVDDKHLLKKDYRKETK) shows a compositional bias: basic and acidic residues. Phosphoserine is present on serine 408. Threonine 410 bears the Phosphothreonine mark. Position 411 is a phosphoserine (serine 411). A compositionally biased stretch (basic and acidic residues) spans 438–451 (KTREPSNAKQQKEK). Positions 452-462 (NKVKKKRKKET) are enriched in basic residues. Over residues 463 to 477 (KGREVRFGKRSDKFC) the composition is skewed to basic and acidic residues. Over residues 481-493 (SESESSESGEDDR) the composition is skewed to acidic residues. The segment covering 513–531 (SLFSSLSASSTSSHGSSAA) has biased composition (low complexity). Residues 539–550 (TDQHTKHWRTDN) are compositionally biased toward basic and acidic residues. The span at 551–562 (WKTISSPAWSEV) shows a compositional bias: polar residues. A compositionally biased stretch (low complexity) spans 576-588 (ESDYSSEGSSVES). Composition is skewed to basic residues over residues 591-602 (PVRKRQEHRKRA) and 629-641 (VKKH…HKNK). Serine 834 bears the Phosphoserine mark. Composition is skewed to basic and acidic residues over residues 881-928 (VKED…EKHK), 935-1043 (SEKD…KSIL), 1059-1090 (KKDT…KEKA), and 1099-1112 (FSEK…KEKS). Disordered regions lie at residues 881-1043 (VKED…KSIL) and 1059-1393 (KKDT…GQYE). Serine 1079 carries the phosphoserine modification. Threonine 1120 is modified (phosphothreonine). Position 1123 is a phosphoserine (serine 1123). Basic and acidic residues-rich tracts occupy residues 1142–1301 (DLPR…DKIS), 1330–1347 (GDDK…LKEK), and 1359–1393 (KSHD…GQYE). Threonine 1419 bears the Phosphothreonine mark. 5 stretches are compositionally biased toward basic and acidic residues: residues 1424–1446 (STEK…KELK), 1466–1545 (REKW…KGDP), 1556–1574 (APSK…KLLG), 1587–1597 (LSQKDLEIEER), and 1605–1639 (MKQM…DIPA). The segment at 1424-1710 (STEKKDKNDS…TGVPTPTSVL (287 aa)) is disordered. A Phosphoserine modification is found at serine 1509. Serine 1692 is subject to Phosphoserine. Over residues 1698–1710 (SRPTGVPTPTSVL) the composition is skewed to polar residues. Residue serine 1792 is modified to Phosphoserine. Residues 1814-1836 (SVPAASSYDSPMPPSMEDRAPLP) are disordered. Serine 1847 is subject to Phosphoserine. 2 positions are modified to phosphotyrosine: tyrosine 1850 and tyrosine 1851. Residues serine 1852, serine 1859, and serine 1990 each carry the phosphoserine modification. Disordered regions lie at residues 1988 to 2019 (PESP…PAPP) and 2131 to 2406 (LDLG…STQQ). Low complexity-rich tracts occupy residues 2310 to 2324 (IQPE…AEAP) and 2391 to 2406 (RSTQ…STQQ). Residues 2369-2663 (AKARGSEDDD…VNDDFVLLPA (295 aa)) form an important for protein degradation region.

In terms of assembly, interacts with the PAS region of the p160 coactivators. Subject to proteasomal degradation which is probably essential to regulate its activity.

It localises to the nucleus. Its function is as follows. Chromatin regulator which modulates histone acetylation and gene expression in neural precursor cells. May recruit histone deacetylases (HDACs) to the p160 coactivators/nuclear receptor complex to inhibit ligand-dependent transactivation. Has a role in proliferation and development of cortical neural precursors. May also regulate bone homeostasis. This chain is Ankyrin repeat domain-containing protein 11 (ANKRD11), found in Homo sapiens (Human).